A 212-amino-acid polypeptide reads, in one-letter code: Redox-sensing transcriptional repressor Rex (212 aa).

Residues 18–57 constitute a DNA-binding region (H-T-H motif); the sequence is LYYRFVNTLKSKGIDRVNSKAISEALNIESATIRRDFSYF. Position 92 to 97 (92 to 97) interacts with NAD(+); the sequence is GVGNLG.

It belongs to the transcriptional regulatory Rex family. As to quaternary structure, homodimer.

It localises to the cytoplasm. Functionally, modulates transcription in response to changes in cellular NADH/NAD(+) redox state. The chain is Redox-sensing transcriptional repressor Rex from Staphylococcus haemolyticus (strain JCSC1435).